The sequence spans 351 residues: Rod outer segment membrane protein 1 (351 aa).

Residues 1–19 (MAPVLPLVLPLQPRIRLAQ) lie on the Cytoplasmic side of the membrane. Residues 20–43 (GLWLLSWLLVLVGGLTLLCSGHLL) form a helical membrane-spanning segment. Topologically, residues 44 to 64 (VQLWHLGTFLAPSCPFSALPQ) are lumenal. The helical transmembrane segment at 65-84 (VALAASAVALGTGLVGSGAS) threads the bilayer. The Cytoplasmic segment spans residues 85 to 102 (RASLDAEQYPPWRGVLGP). Residues 103 to 125 (LLVAGTAGGGGLLVLALGLALAL) form a helical membrane-spanning segment. Over 126–264 (PGTLDTGLEE…EVLLGHLQGL (139 aa)) the chain is Lumenal. A helical transmembrane segment spans residues 265-286 (ASTLGNMLAVTFLLQTLVLLGL). The Cytoplasmic segment spans residues 287 to 351 (RYLQTALEGL…KPPKECLPEA (65 aa)). A disordered region spans residues 325 to 351 (QGAGPHRPAPGETPPEEKPPKECLPEA). Residues 339-351 (PEEKPPKECLPEA) are compositionally biased toward basic and acidic residues.

Belongs to the PRPH2/ROM1 family. In terms of assembly, homodimer; disulfide-linked. Forms a homotetramer. Forms a heterotetramer with PRPH2. Homotetramer and heterotetramer core complexes go on to form higher order complexes by formation of intermolecular disulfide bonds. Interacts with STX3. Interacts with SNAP25. Retina photoreceptor (at protein level). In rim region of ROS disks (at protein level).

The protein localises to the photoreceptor inner segment membrane. It localises to the photoreceptor outer segment membrane. Plays a role in rod outer segment (ROS) morphogenesis. May play a role with PRPH2 in the maintenance of the structure of ROS curved disks. Plays a role in the organization of the ROS and maintenance of ROS disk diameter. Involved in the maintenance of the retina outer nuclear layer. The sequence is that of Rod outer segment membrane protein 1 (ROM1) from Bos taurus (Bovine).